A 181-amino-acid polypeptide reads, in one-letter code: uncharacterized protein (181 aa).

Residues 35-175 form the Nudix hydrolase domain; sequence LRHRCVFVWA…ARLRAWRGAS (141 aa). Residues 72–94 carry the Nudix box motif; that stretch reads GGVVGAGESYDDAALREAEEELG. Residues Glu88 and Glu92 each contribute to the Mg(2+) site.

Belongs to the Nudix hydrolase family. Mg(2+) is required as a cofactor.

This is an uncharacterized protein from Streptomyces coelicolor (strain ATCC BAA-471 / A3(2) / M145).